The chain runs to 293 residues: Inner membrane ABC transporter permease protein YcjO (293 aa).

At 1 to 12 (MNRLFSGRSDMP) the chain is on the periplasmic side. The helical transmembrane segment at 13–33 (FALLLLAPSLLLLGGLVAWPM) threads the bilayer. Residues 34–77 (VSNIEISFLRLPLNPNIESTFVGVSNYVRILSDPGFWHSLWMTV) are Cytoplasmic-facing. In terms of domain architecture, ABC transmembrane type-1 spans 73 to 283 (LWMTVWYTAL…IIIFAVILLT (211 aa)). The chain crosses the membrane as a helical span at residues 78–98 (WYTALVVAGSTVLGLAVAMFF). Residues 99–110 (NREFRLRKTARS) lie on the Periplasmic side of the membrane. Residues 111–131 (LVILSYVTPSISLVFAWKYMF) traverse the membrane as a helical segment. Residues 132–135 (NNGY) are Cytoplasmic-facing. A helical transmembrane segment spans residues 136 to 156 (GIVNYLGVDLLHLYEQAPLWF). The Periplasmic portion of the chain corresponds to 157–162 (DNPGSS). A helical transmembrane segment spans residues 163-183 (FVLVVLFAIWRYFPYAFISFL). The Cytoplasmic portion of the chain corresponds to 184-214 (AILQTIDKSLYEAAEMDGANAWQRFRIVTLP). The chain crosses the membrane as a helical span at residues 215–235 (AIMPVLATVVTLRTIWMFYMF). The Periplasmic segment spans residues 236–261 (ADVYLLTTKVDILGVYLYKTAFAFND). Residues 262-282 (LGKAAAISVVLFIIIFAVILL) form a helical membrane-spanning segment. The Cytoplasmic portion of the chain corresponds to 283-293 (TRKRVNLNGNK).

The protein belongs to the binding-protein-dependent transport system permease family. MalFG subfamily.

It is found in the cell inner membrane. Functionally, probably part of the binding-protein-dependent transport system YcjNOP. Probably responsible for the translocation of the substrate across the membrane. The chain is Inner membrane ABC transporter permease protein YcjO (ycjO) from Escherichia coli (strain K12).